We begin with the raw amino-acid sequence, 100 residues long: Histone H3-like 2 (100 aa).

The tract at residues 1–46 (MARMKHTARMSTGGKAPRKQLASKALRKAPPPPTKGVKQPTTTTSG) is disordered.

It belongs to the histone H3 family. In terms of assembly, the nucleosome is a histone octamer containing two molecules each of H2A, H2B, H3 and H4 assembled in one H3-H4 heterotetramer and two H2A-H2B heterodimers. The octamer wraps approximately 147 bp of DNA. As to expression, pollen specific.

The protein resides in the nucleus. It localises to the chromosome. Functionally, core component of nucleosome. Nucleosomes wrap and compact DNA into chromatin, limiting DNA accessibility to the cellular machineries which require DNA as a template. Histones thereby play a central role in transcription regulation, DNA repair, DNA replication and chromosomal stability. DNA accessibility is regulated via a complex set of post-translational modifications of histones, also called histone code, and nucleosome remodeling. This chain is Histone H3-like 2 (gcH3), found in Lilium longiflorum (Trumpet lily).